We begin with the raw amino-acid sequence, 533 residues long: Probable bifunctional tRNA threonylcarbamoyladenosine biosynthesis protein (533 aa).

Positions 1–328 (MRILGIEGTA…FRPDAVTVTW (328 aa)) are kae1. 2 residues coordinate Fe cation: His-112 and His-116. Residues 133–137 (NASGA), Asp-165, Gly-178, Glu-182, and Asn-261 each bind L-threonylcarbamoyladenylate. Residue Asp-289 coordinates Fe cation. Positions 339–533 (PATLDKTPVR…RDIESRGRYH (195 aa)) constitute a Protein kinase domain. ATP is bound by residues 347–354 (VRGAEAIV) and Lys-363. The active-site Proton acceptor; for kinase activity is the Asp-452.

The protein in the N-terminal section; belongs to the KAE1 / TsaD family. It in the C-terminal section; belongs to the protein kinase superfamily. Tyr protein kinase family. BUD32 subfamily. As to quaternary structure, component of the KEOPS complex that consists of Kae1, Bud32, Cgi121 and Pcc1; the whole complex dimerizes. Requires Fe(2+) as cofactor.

The protein localises to the cytoplasm. The catalysed reaction is L-seryl-[protein] + ATP = O-phospho-L-seryl-[protein] + ADP + H(+). It catalyses the reaction L-threonyl-[protein] + ATP = O-phospho-L-threonyl-[protein] + ADP + H(+). The enzyme catalyses L-threonylcarbamoyladenylate + adenosine(37) in tRNA = N(6)-L-threonylcarbamoyladenosine(37) in tRNA + AMP + H(+). Its function is as follows. Required for the formation of a threonylcarbamoyl group on adenosine at position 37 (t(6)A37) in tRNAs that read codons beginning with adenine. Is a component of the KEOPS complex that is probably involved in the transfer of the threonylcarbamoyl moiety of threonylcarbamoyl-AMP (TC-AMP) to the N6 group of A37. The Kae1 domain likely plays a direct catalytic role in this reaction. The Bud32 domain probably displays kinase activity that regulates Kae1 function. The polypeptide is Probable bifunctional tRNA threonylcarbamoyladenosine biosynthesis protein (Haloquadratum walsbyi (strain DSM 16790 / HBSQ001)).